The chain runs to 509 residues: tRNA-2-methylthio-N(6)-dimethylallyladenosine synthase (509 aa).

A compositionally biased stretch (polar residues) spans 1-15 (MNEQQRLASQQVNSS). The disordered stretch occupies residues 1 to 26 (MNEQQRLASQQVNSSTKKEEKDYSKY). A compositionally biased stretch (basic and acidic residues) spans 16 to 25 (TKKEEKDYSK). One can recognise an MTTase N-terminal domain in the interval 66–184 (RKFYIRTYGC…LPYILKDAMF (119 aa)). Cys75, Cys111, Cys145, Cys221, Cys225, and Cys228 together coordinate [4Fe-4S] cluster. Positions 207–437 (RRGDIKAWVN…NALVNKLAIE (231 aa)) constitute a Radical SAM core domain. In terms of domain architecture, TRAM spans 440-503 (DRYKGQIVEV…TWSLNGELVE (64 aa)).

Belongs to the methylthiotransferase family. MiaB subfamily. In terms of assembly, monomer. Requires [4Fe-4S] cluster as cofactor.

The protein localises to the cytoplasm. It catalyses the reaction N(6)-dimethylallyladenosine(37) in tRNA + (sulfur carrier)-SH + AH2 + 2 S-adenosyl-L-methionine = 2-methylsulfanyl-N(6)-dimethylallyladenosine(37) in tRNA + (sulfur carrier)-H + 5'-deoxyadenosine + L-methionine + A + S-adenosyl-L-homocysteine + 2 H(+). Functionally, catalyzes the methylthiolation of N6-(dimethylallyl)adenosine (i(6)A), leading to the formation of 2-methylthio-N6-(dimethylallyl)adenosine (ms(2)i(6)A) at position 37 in tRNAs that read codons beginning with uridine. This is tRNA-2-methylthio-N(6)-dimethylallyladenosine synthase from Bacillus thuringiensis (strain Al Hakam).